Reading from the N-terminus, the 174-residue chain is Elongation factor Tu, mitochondrial (174 aa).

62-66 (DCPGH) lines the GTP pocket. Lys78 bears the N6-succinyllysine mark. Residue Thr103 is modified to Phosphothreonine. Residue Ser121 is modified to Phosphoserine. The residue at position 161 (Lys161) is an N6-acetyllysine.

It belongs to the GTP-binding elongation factor family. EF-Tu/EF-1A subfamily.

It localises to the mitochondrion. The enzyme catalyses GTP + H2O = GDP + phosphate + H(+). Functionally, GTP hydrolase that promotes the GTP-dependent binding of aminoacyl-tRNA to the A-site of ribosomes during protein biosynthesis. The chain is Elongation factor Tu, mitochondrial from Mesocricetus auratus (Golden hamster).